The chain runs to 269 residues: MGRSPCCEKEHMNKGAWTKEEDERLVSYIKSHGEGCWRSLPRAAGLLRCGKSCRLRWINYLRPDLKRGNFTHDEDELIIKLHSLLGNKWSLIAARLPGRTDNEIKNYWNTHIKRKLLSKGIDPATHRGINEAKISDLKKTKDQIVKDVSFVTKFEETDKSGDQKQNKYIRNGLVCKEERVVVEEKIGPDLNLELRISPPWQNQREISTCTASRFYMENDMECSSETVKCQTENSSSISYSSIDISSSNVGYDFLGLKTRILDFRSLEMK.

HTH myb-type domains follow at residues 9–61 (KEHM…INYL) and 62–116 (RPDL…KRKL). 2 DNA-binding regions (H-T-H motif) span residues 37 to 61 (WRSL…INYL) and 89 to 112 (WSLI…NTHI).

Interacts with SAD2. Expressed in anthers. Expressed in pollen grains and mature seeds. Expressed in roots and vasculature of leaves.

The protein localises to the nucleus. Functionally, transcription factor involved in the negative regulation of flavonol biosynthesis. Represses the early phenylpropanoid genes, phenylalanine ammonia-lyase (PAL), cinnamate 4-hydroxylase (C4H) and 4-coumarate-CoA ligase (4CL), as well as the flavonoid-specific genes, flavonoid 3'-hydroxylase (F3'H) and dihydroflavonol 4-reductase (DFR). Plays a role in seed germination inhibition. Negatively regulates the expression of the abscisic acid (ABA) signaling transcription factor ABI5 in seeds. In Arabidopsis thaliana (Mouse-ear cress), this protein is Transcription factor MYB7.